A 167-amino-acid polypeptide reads, in one-letter code: Ubiquitin-fold modifier-conjugating enzyme 1 (167 aa).

Cys116 acts as the Glycyl thioester intermediate in catalysis. Lys122 participates in a covalent cross-link: Glycyl lysine isopeptide (Lys-Gly) (interchain with G-Cter in UFM1).

The protein belongs to the ubiquitin-conjugating enzyme family. UFC1 subfamily. In terms of assembly, interacts with UBA5 (via C-terminus). Interacts with UFL1. Interacts with UFM1. Interacts with KIRREL3. In terms of processing, ufmylated at Lys-122. Deufmylated by UFSP1.

In terms of biological role, E2-like enzyme which specifically catalyzes the second step in ufmylation. Accepts the ubiquitin-like modifier UFM1 from the E1 enzyme UBA5 and forms an intermediate with UFM1 via a thioester linkage. Ufmylation is involved in various processes, such as ribosome recycling, response to DNA damage, interferon response or reticulophagy (also called ER-phagy). This is Ubiquitin-fold modifier-conjugating enzyme 1 from Mus musculus (Mouse).